We begin with the raw amino-acid sequence, 251 residues long: tRNA-cytidine(32) 2-sulfurtransferase 2 (251 aa).

The PP-loop motif signature appears at 33 to 38; that stretch reads SGGKDS. Cysteine 108, cysteine 111, and cysteine 199 together coordinate [4Fe-4S] cluster.

The protein belongs to the TtcA family. Homodimer. Requires Mg(2+) as cofactor. [4Fe-4S] cluster is required as a cofactor.

It is found in the cytoplasm. It catalyses the reaction cytidine(32) in tRNA + S-sulfanyl-L-cysteinyl-[cysteine desulfurase] + AH2 + ATP = 2-thiocytidine(32) in tRNA + L-cysteinyl-[cysteine desulfurase] + A + AMP + diphosphate + H(+). It functions in the pathway tRNA modification. Its function is as follows. Catalyzes the ATP-dependent 2-thiolation of cytidine in position 32 of tRNA, to form 2-thiocytidine (s(2)C32). The sulfur atoms are provided by the cysteine/cysteine desulfurase (IscS) system. The chain is tRNA-cytidine(32) 2-sulfurtransferase 2 from Francisella tularensis subsp. tularensis (strain FSC 198).